The sequence spans 189 residues: Cytidylate kinase (189 aa).

7 to 15 lines the ATP pocket; that stretch reads GPPGSGKTS.

This sequence belongs to the cytidylate kinase family. Type 2 subfamily.

The protein resides in the cytoplasm. The catalysed reaction is CMP + ATP = CDP + ADP. It catalyses the reaction dCMP + ATP = dCDP + ADP. In Saccharolobus islandicus (strain Y.N.15.51 / Yellowstone #2) (Sulfolobus islandicus), this protein is Cytidylate kinase.